A 381-amino-acid polypeptide reads, in one-letter code: L-lactate dehydrogenase (381 aa).

In terms of domain architecture, FMN hydroxy acid dehydrogenase spans Met-1–Lys-380. A substrate-binding site is contributed by Tyr-24. 2 residues coordinate FMN: Ser-106 and Gln-127. Tyr-129 lines the substrate pocket. Thr-155 is a binding site for FMN. Position 164 (Arg-164) interacts with substrate. Lys-251 is an FMN binding site. His-275 (proton acceptor) is an active-site residue. Position 278 (Arg-278) interacts with substrate. Asp-306 to Arg-330 contacts FMN.

Belongs to the FMN-dependent alpha-hydroxy acid dehydrogenase family. FMN is required as a cofactor.

The protein resides in the cell inner membrane. It catalyses the reaction (S)-lactate + A = pyruvate + AH2. In terms of biological role, catalyzes the conversion of L-lactate to pyruvate. Is coupled to the respiratory chain. The chain is L-lactate dehydrogenase from Actinobacillus pleuropneumoniae serotype 3 (strain JL03).